The primary structure comprises 66 residues: Nigrocin-2ISa (66 aa).

Residues 1-22 (MFTLKKSMLLLFFLGTINLSLC) form the signal peptide. A propeptide spans 23 to 43 (QEERDAEEERRDEDNAKMEEI) (removed in mature form). A disulfide bridge connects residues cysteine 60 and cysteine 66.

As to expression, expressed by the skin glands.

It is found in the secreted. Functionally, has antimicrobial activity against Gram-negative bacterium E.coli ATCC 8739 (MIC=25 ug), against Gram positive bacteria S.aureus ATCC 6538 (MIC=3.1 ug), methicillin-resistant S.aureus ATCC 43300 (MIC=12.5 ug), B.subtilis ATCC 6633 (MIC=12.5 ug) and against fungus C.albicans ATCC 90028 (MIC=50 ug). This Odorrana ishikawae (Ishikawa's frog) protein is Nigrocin-2ISa.